Consider the following 502-residue polypeptide: ATP synthase subunit alpha (502 aa).

G169 to T176 provides a ligand contact to ATP.

It belongs to the ATPase alpha/beta chains family. F-type ATPases have 2 components, CF(1) - the catalytic core - and CF(0) - the membrane proton channel. CF(1) has five subunits: alpha(3), beta(3), gamma(1), delta(1), epsilon(1). CF(0) has three main subunits: a(1), b(2) and c(9-12). The alpha and beta chains form an alternating ring which encloses part of the gamma chain. CF(1) is attached to CF(0) by a central stalk formed by the gamma and epsilon chains, while a peripheral stalk is formed by the delta and b chains.

It is found in the cell inner membrane. It carries out the reaction ATP + H2O + 4 H(+)(in) = ADP + phosphate + 5 H(+)(out). In terms of biological role, produces ATP from ADP in the presence of a proton gradient across the membrane. The alpha chain is a regulatory subunit. The polypeptide is ATP synthase subunit alpha (Oleidesulfovibrio alaskensis (strain ATCC BAA-1058 / DSM 17464 / G20) (Desulfovibrio alaskensis)).